A 121-amino-acid chain; its full sequence is Small ribosomal subunit protein uS13 (121 aa).

The tract at residues 94 to 121 (GLPVRGQRTRTNARTRKGKRKTVAGKKK) is disordered.

This sequence belongs to the universal ribosomal protein uS13 family. As to quaternary structure, part of the 30S ribosomal subunit. Forms a loose heterodimer with protein S19. Forms two bridges to the 50S subunit in the 70S ribosome.

Located at the top of the head of the 30S subunit, it contacts several helices of the 16S rRNA. In the 70S ribosome it contacts the 23S rRNA (bridge B1a) and protein L5 of the 50S subunit (bridge B1b), connecting the 2 subunits; these bridges are implicated in subunit movement. Contacts the tRNAs in the A and P-sites. This is Small ribosomal subunit protein uS13 from Treponema pallidum (strain Nichols).